A 192-amino-acid polypeptide reads, in one-letter code: Imidazoleglycerol-phosphate dehydratase (192 aa).

This sequence belongs to the imidazoleglycerol-phosphate dehydratase family.

The protein localises to the cytoplasm. The catalysed reaction is D-erythro-1-(imidazol-4-yl)glycerol 3-phosphate = 3-(imidazol-4-yl)-2-oxopropyl phosphate + H2O. Its pathway is amino-acid biosynthesis; L-histidine biosynthesis; L-histidine from 5-phospho-alpha-D-ribose 1-diphosphate: step 6/9. This chain is Imidazoleglycerol-phosphate dehydratase, found in Carboxydothermus hydrogenoformans (strain ATCC BAA-161 / DSM 6008 / Z-2901).